The chain runs to 249 residues: 2,3-bisphosphoglycerate-dependent phosphoglycerate mutase (249 aa).

Substrate-binding positions include 9–16, 22–23, Arg-61, 88–91, Lys-99, 115–116, and 184–185; these read RHGQSQWN, TG, ERHY, RR, and GN. Catalysis depends on His-10, which acts as the Tele-phosphohistidine intermediate. The active-site Proton donor/acceptor is the Glu-88.

The protein belongs to the phosphoglycerate mutase family. BPG-dependent PGAM subfamily. Homodimer.

It catalyses the reaction (2R)-2-phosphoglycerate = (2R)-3-phosphoglycerate. It participates in carbohydrate degradation; glycolysis; pyruvate from D-glyceraldehyde 3-phosphate: step 3/5. In terms of biological role, catalyzes the interconversion of 2-phosphoglycerate and 3-phosphoglycerate. The sequence is that of 2,3-bisphosphoglycerate-dependent phosphoglycerate mutase from Stenotrophomonas maltophilia (strain K279a).